We begin with the raw amino-acid sequence, 210 residues long: Prohead protease (210 aa).

A propeptide spanning residues 1–23 (MTQAAIDYNKLKSAPVHLDAYIK) is cleaved from the precursor. Catalysis depends on residues H76, S122, and E148. Positions 167 to 210 (SMNGHDYTEWRKSFTAISSKAVPAQERNLSELEKLAIALGYVKE) are excised as a propeptide.

Belongs to the HK97 prohead protease protein family. Cleaves itself autocatalytically to yield the mature form of the protease.

It is found in the virion. Functionally, serine protease involved in capsid assembly and maturation. Cleaves the major capsid protein, the decoration protein, the portal protein to yield mature procapsids competent for DNA packaging. Acts as a trigger for assembly of the capsid protein. This is Prohead protease from Escherichia coli (Enterobacteria phage T5).